The primary structure comprises 152 residues: Ribosomal RNA large subunit methyltransferase H (152 aa).

S-adenosyl-L-methionine is bound by residues leucine 68, glycine 100, and 119–124; that span reads LGVMTW.

The protein belongs to the RNA methyltransferase RlmH family. In terms of assembly, homodimer.

The protein resides in the cytoplasm. It catalyses the reaction pseudouridine(1915) in 23S rRNA + S-adenosyl-L-methionine = N(3)-methylpseudouridine(1915) in 23S rRNA + S-adenosyl-L-homocysteine + H(+). Specifically methylates the pseudouridine at position 1915 (m3Psi1915) in 23S rRNA. The chain is Ribosomal RNA large subunit methyltransferase H from Rhodospirillum rubrum (strain ATCC 11170 / ATH 1.1.1 / DSM 467 / LMG 4362 / NCIMB 8255 / S1).